The sequence spans 62 residues: Large ribosomal subunit protein bL32 (62 aa).

Residues 1-20 (MAVPARHTSKQKKRSRRGHI) are disordered. Positions 7 to 20 (HTSKQKKRSRRGHI) are enriched in basic residues.

The protein belongs to the bacterial ribosomal protein bL32 family.

This chain is Large ribosomal subunit protein bL32, found in Lactobacillus acidophilus (strain ATCC 700396 / NCK56 / N2 / NCFM).